Here is a 487-residue protein sequence, read N- to C-terminus: UDP-N-acetylmuramoyl-L-alanyl-D-glutamate--2,6-diaminopimelate ligase (487 aa).

The UDP-N-acetyl-alpha-D-muramoyl-L-alanyl-D-glutamate site is built by Leu-23 and Ser-25. An ATP-binding site is contributed by 108–114; it reads GTNGKTS. UDP-N-acetyl-alpha-D-muramoyl-L-alanyl-D-glutamate-binding positions include 150–151, Ser-177, Gln-183, and Arg-185; that span reads TT. At Lys-217 the chain carries N6-carboxylysine. Residues Arg-378, 402–405, Gly-453, and Glu-457 each bind meso-2,6-diaminopimelate; that span reads DNPR. Positions 402-405 match the Meso-diaminopimelate recognition motif motif; the sequence is DNPR.

The protein belongs to the MurCDEF family. MurE subfamily. It depends on Mg(2+) as a cofactor. Carboxylation is probably crucial for Mg(2+) binding and, consequently, for the gamma-phosphate positioning of ATP.

The protein resides in the cytoplasm. It catalyses the reaction UDP-N-acetyl-alpha-D-muramoyl-L-alanyl-D-glutamate + meso-2,6-diaminopimelate + ATP = UDP-N-acetyl-alpha-D-muramoyl-L-alanyl-gamma-D-glutamyl-meso-2,6-diaminopimelate + ADP + phosphate + H(+). It participates in cell wall biogenesis; peptidoglycan biosynthesis. In terms of biological role, catalyzes the addition of meso-diaminopimelic acid to the nucleotide precursor UDP-N-acetylmuramoyl-L-alanyl-D-glutamate (UMAG) in the biosynthesis of bacterial cell-wall peptidoglycan. This is UDP-N-acetylmuramoyl-L-alanyl-D-glutamate--2,6-diaminopimelate ligase from Pseudomonas syringae pv. tomato (strain ATCC BAA-871 / DC3000).